The sequence spans 51 residues: Insulin-2 (51 aa).

3 disulfides stabilise this stretch: cysteine 8/cysteine 37, cysteine 20/cysteine 50, and cysteine 36/cysteine 41.

This sequence belongs to the insulin family. As to quaternary structure, heterodimer of a B chain and an A chain linked by two disulfide bonds.

It localises to the secreted. In terms of biological role, insulin decreases blood glucose concentration. It increases cell permeability to monosaccharides, amino acids and fatty acids. It accelerates glycolysis, the pentose phosphate cycle, and glycogen synthesis in liver. The sequence is that of Insulin-2 from Katsuwonus pelamis (Skipjack tuna).